A 65-amino-acid chain; its full sequence is Large ribosomal subunit protein bL35 (65 aa).

It belongs to the bacterial ribosomal protein bL35 family.

The protein is Large ribosomal subunit protein bL35 of Thermotoga neapolitana (strain ATCC 49049 / DSM 4359 / NBRC 107923 / NS-E).